The primary structure comprises 481 residues: Beta-1,3-glucan-binding protein (481 aa).

The N-terminal stretch at 1 to 18 is a signal peptide; that stretch reads RCARVCAVLFLFIQISYG. Positions 20–120 constitute a CBM39 domain; it reads YQVPQVTVQA…LSFTVSALED (101 aa). An N-linked (GlcNAc...) asparagine glycan is attached at asparagine 110. The region spanning 124 to 481 is the GH16 domain; it reads TGTGTDPVPT…LVDYVKVVAL (358 aa).

Belongs to the insect beta-1,3-glucan binding protein family.

Its subcellular location is the secreted. Involved in the recognition of invading microorganisms. Binds specifically to beta-1,3-glucan and activates the phenoloxidase cascade. This chain is Beta-1,3-glucan-binding protein, found in Hyphantria cunea (Fall webworm moth).